We begin with the raw amino-acid sequence, 75 residues long: Vacuolar ATPase assembly integral membrane protein VMA21 (75 aa).

Over 1–8 the chain is Cytoplasmic; sequence MPVDVAPG. Residues 9–29 form a helical membrane-spanning segment; that stretch reads VIKKLMFFTAAMVICPLLTFF. Residues 30-41 lie on the Lumenal side of the membrane; it reads SIKQFTTNTIVS. The helical transmembrane segment at 42 to 62 threads the bilayer; the sequence is GGLAALAANLVLIGYIVVAFM. Residues 63-75 lie on the Cytoplasmic side of the membrane; the sequence is EDTTDVKAESKKD.

It belongs to the VMA21 family.

The protein resides in the endoplasmic reticulum membrane. The protein localises to the endoplasmic reticulum-Golgi intermediate compartment membrane. It is found in the cytoplasmic vesicle. It localises to the COPII-coated vesicle membrane. Its function is as follows. Required for the assembly of the V0 complex of the vacuolar ATPase (V-ATPase) in the endoplasmic reticulum. The sequence is that of Vacuolar ATPase assembly integral membrane protein VMA21 from Vanderwaltozyma polyspora (strain ATCC 22028 / DSM 70294 / BCRC 21397 / CBS 2163 / NBRC 10782 / NRRL Y-8283 / UCD 57-17) (Kluyveromyces polysporus).